A 163-amino-acid chain; its full sequence is Phospholipase A2 homolog 3 (163 aa).

A signal peptide spans methionine 1–glutamine 43. 6 disulfides stabilise this stretch: cysteine 55–cysteine 83, cysteine 59–cysteine 89, cysteine 64–cysteine 137, cysteine 76–cysteine 96, cysteine 95–cysteine 121, and cysteine 102–cysteine 114. Tyrosine 75, glycine 77, and tyrosine 80 together coordinate Ca(2+). Residue histidine 99 is part of the active site. Aspartate 100 contacts Ca(2+).

The protein belongs to the phospholipase A2 family. It depends on Ca(2+) as a cofactor.

It is found in the secreted. The enzyme catalyses a 1,2-diacyl-sn-glycero-3-phosphocholine + H2O = a 1-acyl-sn-glycero-3-phosphocholine + a fatty acid + H(+). Its activity is regulated as follows. Inhibited by EGTA. Functionally, PA2 catalyzes the calcium-dependent hydrolysis of the 2-acyl groups in 3-sn-phosphoglycerides. Releases lysophospholipids (LPLs) and free fatty acids (FFAs) from membrane phospholipids in response to hormones and other external stimuli. This Oryza sativa subsp. japonica (Rice) protein is Phospholipase A2 homolog 3 (PLA2-III).